A 421-amino-acid chain; its full sequence is Testin (421 aa).

The region spanning 92-199 is the PET domain; it reads MILTNPVAAK…GDVKLPREMD (108 aa). Residues 133–164 form a disordered region; it reads EKQPVAGSEGAQYRKKQLAKQLPAHDQDPSKC. The segment covering 155-164 has biased composition (basic and acidic residues); it reads PAHDQDPSKC. LIM zinc-binding domains follow at residues 234–297, 299–359, and 362–421; these read YSCY…CDSE, PRCA…NHAV, and QGCH…KMMS.

Belongs to the prickle / espinas / testin family. Interacts via LIM domain 1 with ZYX. Interacts (via LIM domain 3) with ENAH and VASP. Interacts with ALKBH4, talin, actin, alpha-actinin, GRIP1 and PXN. Interacts (via LIM domain 2) with ACTL7A (via N-terminus). Heterodimer with ACTL7A; the heterodimer interacts with ENAH to form a heterotrimer.

It is found in the cytoplasm. It localises to the cell junction. Its subcellular location is the focal adhesion. Functionally, scaffold protein that may play a role in cell adhesion, cell spreading and in the reorganization of the actin cytoskeleton. Plays a role in the regulation of cell proliferation. May act as a tumor suppressor. This Canis lupus familiaris (Dog) protein is Testin (TES).